The following is a 412-amino-acid chain: L-threonine:uridine-5'-aldehyde transaldolase (412 aa).

K229 is modified (N6-(pyridoxal phosphate)lysine).

It belongs to the SHMT family. Pyridoxal 5'-phosphate serves as cofactor.

It carries out the reaction uridine-5'-aldehyde + L-threonine = (5'S,6'S)-C-glycyluridine + acetaldehyde. It participates in antibiotic biosynthesis. Transaldolase involved in the biosynthesis of the capuramycin-type nucleoside antibiotic A-503083. Catalyzes the condensation of L-threonine and uridine-5'-aldehyde to form 5'-C-glycyluridine (GlyU). Forms (5'S,6'S)-GlyU. The polypeptide is L-threonine:uridine-5'-aldehyde transaldolase (Streptomyces sp).